Reading from the N-terminus, the 611-residue chain is MENLVKSCAGIEKKRSNLTPSMEDILTESKERSSTSGASYESSSTTTVASSSPPPPPSQILGWPIRKASFRKNSKESVNFDHKKLTLHDDSGFKAKEMNSADVEMMKERFAKLLLGEDMSGSGKGVCTALAISNAITNLCATIFGQLWRLEPLSSEKKEMWRREMEWILSVSDHIVELTPSTQTYPDGNKFEVMTCRPRFDLFINLPALRKLDNMLLDILASFKKTEFWYVDQGIVASENDGSASFRRKIQRQEEKWWLPVPRLAPNGLTEEARTELNHKRECATQILKAAMAINSLALTEMDVPKSYLETLPKNGRSCLGDVIYRYVTSDKFSAESLLDCLDLSSEHIALDIANRVEASIYVWRRRVQTKLGVNNNTSSTTPKLTWEMVKELMAAGDKRGLLVERSETLLRCLKQRFPSLTQTSLDISKIQWNKDIGKSILESYSRALESLASNIIARIDDLLYVDDLTKQSDDNNLLSSPAVSSIIAHKKVVPLPYLISASGTPYRTSFSTTPGFSPSMISPKKGERRTPYSSKDTNKIIEKGLPSRGYGVRRVLNNYLGMESKLKICVNPSDNADTAVINQISKDVEEEKKRNSTSVHQKGPPKYTVS.

Residues 1–62 (MENLVKSCAG…PPPPPSQILG (62 aa)) are disordered. Residues 34–51 (STSGASYESSSTTTVASS) are compositionally biased toward low complexity. One can recognise a PRONE domain in the interval 93-477 (FKAKEMNSAD…DLTKQSDDNN (385 aa)). Disordered regions lie at residues 513–541 (TTPG…TNKI) and 588–611 (DVEE…YTVS). A compositionally biased stretch (basic and acidic residues) spans 525 to 541 (KKGERRTPYSSKDTNKI).

In terms of biological role, guanine-nucleotide exchange factor (GEF) that acts as an activator of Rop (Rho of plants) GTPases by promoting the exchange of GDP for GTP. The protein is Rop guanine nucleotide exchange factor 5 (ROPGEF5) of Arabidopsis thaliana (Mouse-ear cress).